A 619-amino-acid polypeptide reads, in one-letter code: Nucleolar GTP-binding protein 2 (619 aa).

Positions 1–10 (MGTGKKEKSR) are enriched in basic and acidic residues. The segment at 1-24 (MGTGKKEKSRIQRQGKVTGDPKVK) is disordered. The region spanning 222–383 (WNELYKVIDS…LIDCPGIVPP (162 aa)) is the CP-type G domain. Residues 332–339 (GYPNVGKS) and 376–380 (DCPGI) each bind GTP. The segment at 473-619 (PWFTPAPEKE…PPKKQRRSRK (147 aa)) is disordered. Residues 489-500 (MEGREGRYGEMS) are compositionally biased toward basic and acidic residues. Positions 536–546 (SDSDSEVEEAA) are enriched in acidic residues. Over residues 547–556 (EEKGEEKSTA) the composition is skewed to basic and acidic residues. Residues 565–603 (SSDEEEDGEEEGSDVEDDEEGSDLDIEGASELEESESEA) are compositionally biased toward acidic residues.

It belongs to the TRAFAC class YlqF/YawG GTPase family. NOG2 subfamily.

Its subcellular location is the nucleus. The protein localises to the nucleolus. Functionally, GTPase that associates with pre-60S ribosomal subunits in the nucleolus and is required for their nuclear export and maturation. This chain is Nucleolar GTP-binding protein 2 (nog-2), found in Neurospora crassa (strain ATCC 24698 / 74-OR23-1A / CBS 708.71 / DSM 1257 / FGSC 987).